The primary structure comprises 62 residues: UPF0434 protein RL4569 (62 aa).

It belongs to the UPF0434 family.

This Rhizobium johnstonii (strain DSM 114642 / LMG 32736 / 3841) (Rhizobium leguminosarum bv. viciae) protein is UPF0434 protein RL4569.